The primary structure comprises 529 residues: Zinc finger protein 572 (529 aa).

A disordered region spans residues 1–62; sequence MEQEKKLLVS…EWSKRHRPQH (62 aa). Glycyl lysine isopeptide (Lys-Gly) (interchain with G-Cter in SUMO2) cross-links involve residues K5 and K6. The segment covering 26-35 has biased composition (polar residues); it reads TGDTSMNNLE. Over residues 36 to 55 the composition is skewed to basic and acidic residues; that stretch reads TVHHNNSKADKLKEKPSEWS. 12 consecutive C2H2-type zinc fingers follow at residues 132-154, 160-182, 188-210, 216-238, 244-266, 272-294, 300-322, 328-350, 384-406, 412-434, 440-462, and 468-490; these read YKCS…QRTH, YKCS…LRMH, YQCG…ERTH, YKCP…HRSH, YECS…QRTH, YKCP…QRTH, YKCL…QRIH, YQCP…QKMH, YRCC…QRTH, YRCS…QRTH, YKCP…RRTH, and YKCT…RKIH.

It belongs to the krueppel C2H2-type zinc-finger protein family.

The protein resides in the nucleus. Functionally, may be involved in transcriptional regulation. This Homo sapiens (Human) protein is Zinc finger protein 572 (ZNF572).